Reading from the N-terminus, the 1200-residue chain is Hyalin (1200 aa).

HYR domains follow at residues 1–39 (SSHNPGQSFTTGTTTTVVYTATDAFANVGQCAFTITVTA), 40–123 (TDTT…NVIE), 124–207 (VDTT…NVIE), 208–292 (VDTT…NVIE), 293–376 (VDTT…NVVE), 377–460 (VDTT…NVVE), 461–544 (VDTT…TVEE), 546–629 (VDTT…TVIA), 630–713 (VDTT…TISA), 714–797 (VDTT…VINA), 798–881 (VDTT…TIGT), 882–966 (VDTM…TVFA), 967–1050 (VDTT…TVTA), 1051–1133 (QDTT…TVNT), and 1134–1200 (QDTT…FFSD).

In terms of assembly, homooligomer in presence of calcium. In terms of processing, glycosylated.

It is found in the secreted. Its subcellular location is the extracellular space. The protein localises to the extracellular matrix. In terms of biological role, major constituent of the hyaline layer. The hyaline layer of echinoderm embryos is an extraembryonic matrix that functions as a substrate for cell adhesion through early development. The sequence is that of Hyalin from Strongylocentrotus purpuratus (Purple sea urchin).